The following is a 365-amino-acid chain: Chorismate synthase (365 aa).

NADP(+) is bound by residues Arg-48 and Arg-54. Residues 125 to 127, 238 to 239, Ala-278, 293 to 297, and Arg-319 contribute to the FMN site; these read RSS, NA, and KPTSS.

It belongs to the chorismate synthase family. As to quaternary structure, homotetramer. The cofactor is FMNH2.

The enzyme catalyses 5-O-(1-carboxyvinyl)-3-phosphoshikimate = chorismate + phosphate. The protein operates within metabolic intermediate biosynthesis; chorismate biosynthesis; chorismate from D-erythrose 4-phosphate and phosphoenolpyruvate: step 7/7. Functionally, catalyzes the anti-1,4-elimination of the C-3 phosphate and the C-6 proR hydrogen from 5-enolpyruvylshikimate-3-phosphate (EPSP) to yield chorismate, which is the branch point compound that serves as the starting substrate for the three terminal pathways of aromatic amino acid biosynthesis. This reaction introduces a second double bond into the aromatic ring system. The polypeptide is Chorismate synthase (Pseudoalteromonas translucida (strain TAC 125)).